A 133-amino-acid chain; its full sequence is Ribosome-binding factor A (133 aa).

It belongs to the RbfA family. In terms of assembly, monomer. Binds 30S ribosomal subunits, but not 50S ribosomal subunits or 70S ribosomes.

It is found in the cytoplasm. Functionally, one of several proteins that assist in the late maturation steps of the functional core of the 30S ribosomal subunit. Associates with free 30S ribosomal subunits (but not with 30S subunits that are part of 70S ribosomes or polysomes). Required for efficient processing of 16S rRNA. May interact with the 5'-terminal helix region of 16S rRNA. The polypeptide is Ribosome-binding factor A (Cronobacter sakazakii (strain ATCC BAA-894) (Enterobacter sakazakii)).